Here is a 117-residue protein sequence, read N- to C-terminus: Large ribosomal subunit protein eL34 (117 aa).

Phosphoserine is present on Ser-12. Lys-36 and Lys-43 each carry N6-acetyllysine. Residue Lys-108 forms a Glycyl lysine isopeptide (Lys-Gly) (interchain with G-Cter in SUMO2) linkage.

Belongs to the eukaryotic ribosomal protein eL34 family. In terms of assembly, component of the large ribosomal subunit.

It localises to the cytoplasm. The protein resides in the cytosol. The protein localises to the endoplasmic reticulum. Component of the large ribosomal subunit. The ribosome is a large ribonucleoprotein complex responsible for the synthesis of proteins in the cell. In Rattus norvegicus (Rat), this protein is Large ribosomal subunit protein eL34 (Rpl34).